Reading from the N-terminus, the 382-residue chain is O-antigen polymerase (382 aa).

The Cytoplasmic segment spans residues 1–3; the sequence is MNN. The chain crosses the membrane as a helical span at residues 4-22; sequence INKIFITFLCIELIIGGGG. Residues 23 to 34 lie on the Periplasmic side of the membrane; sequence RLLEPLGIFPLR. A helical transmembrane segment spans residues 35 to 54; it reads YLLFVFSFILLIFNLVTFNF. Residues 55–62 lie on the Cytoplasmic side of the membrane; that stretch reads SITQKCVS. Residues 63–81 form a helical membrane-spanning segment; it reads LFIWLLLFPFYGFFVGLLA. The Periplasmic segment spans residues 82 to 94; it reads GNKINDILFDVQP. The helical transmembrane segment at 95–112 threads the bilayer; sequence YLFMLSLIYLFTLRYTLK. The Cytoplasmic portion of the chain corresponds to 113-125; that stretch reads VFSCEIFIKIVNA. The helical transmembrane segment at 126 to 146 threads the bilayer; it reads FALYGSLLYISYIILLNFGLL. Residues 147-167 lie on the Periplasmic side of the membrane; that stretch reads NFNLIYEHLSLTSEFFFRPDG. Residues 168-187 traverse the membrane as a helical segment; the sequence is AFFSKSFYFFGVGAIISFVD. The Cytoplasmic segment spans residues 188-189; it reads KK. Residues 190-206 form a helical membrane-spanning segment; that stretch reads YLKCLIIVLAILLTESR. Topologically, residues 207–208 are periplasmic; the sequence is GV. Residues 209 to 226 form a helical membrane-spanning segment; that stretch reads LLFTTLSLLLASFKLHKL. At 227–229 the chain is on the cytoplasmic side; that stretch reads YLN. The chain crosses the membrane as a helical span at residues 230-247; sequence TIIIILGSVLFIIMLYMV. Residues 248 to 300 are Periplasmic-facing; it reads GSRSEDSDSVRFNDLYFYYKNVDLATFLFGRGFGSFILDRLRIEIVPLEILQK. Residues 301–318 traverse the membrane as a helical segment; the sequence is TGVIGVFISLVPMLLIFL. Residues 319–329 are Cytoplasmic-facing; that stretch reads KGYFLNSTKTS. A helical transmembrane segment spans residues 330–349; it reads LMMSLILFFSITVSITNPFL. Topologically, residues 350-352 are periplasmic; that stretch reads FTP. Residues 353–370 traverse the membrane as a helical segment; that stretch reads MGIFIIGVVVLWVFSIEN. Over 371–382 the chain is Cytoplasmic; sequence IQISNNLTSGAK.

The protein localises to the cell inner membrane. It carries out the reaction n lipid-linked O-antigen repeat units = a lipid-linked O antigen + (n-1) polyisoprenyl diphosphate.. It participates in bacterial outer membrane biogenesis; LPS O-antigen biosynthesis. Polymerase involved in the biosynthesis of the lipopolysaccharide (LPS). Catalyzes the polymerization of the O-antigen repeat units on the periplasmic face of the inner membrane, leading to the formation of the lipid-linked O-antigen molecule. In Shigella flexneri, this protein is O-antigen polymerase.